The sequence spans 426 residues: Protein prenyltransferase alpha subunit repeat-containing protein 1 (426 aa).

PFTA repeat units lie at residues 86-119 (ALVD…VLNP), 121-154 (KDLY…QKEC), 180-213 (EEMR…AKGN), and 219-252 (DELS…AKEL). The tract at residues 255 to 279 (AAEKDVHTSQQPNGENTATASDDNH) is disordered. Positions 262-275 (TSQQPNGENTATAS) are enriched in polar residues. Residues 290 to 323 (EEIQLCTDLIESYPGHETLWCHRRHVFYLWHQWR) form a PFTA 5 repeat.

The protein belongs to the protein prenyltransferase subunit alpha family.

The chain is Protein prenyltransferase alpha subunit repeat-containing protein 1 (ptar1) from Danio rerio (Zebrafish).